We begin with the raw amino-acid sequence, 591 residues long: Adenine deaminase (591 aa).

It belongs to the metallo-dependent hydrolases superfamily. Adenine deaminase family. As to quaternary structure, homodimer. The cofactor is Mn(2+).

It catalyses the reaction adenine + H2O + H(+) = hypoxanthine + NH4(+). This chain is Adenine deaminase, found in Edwardsiella ictaluri (strain 93-146).